The chain runs to 426 residues: Casein kinase I (426 aa).

Residues 9-278 form the Protein kinase domain; the sequence is YRISRKIGGG…LRKLLREMFV (270 aa). Residues 15 to 23 and Lys38 each bind ATP; that span reads IGGGSFGEI. Asp128 (proton acceptor) is an active-site residue. 2 disordered regions span residues 340–360 and 377–426; these read TTTT…TVSN and PSYN…PPAK. Residues 345–360 show a composition bias toward polar residues; it reads SSSQPSNVKNISTVSN. Residues 386-404 show a composition bias toward low complexity; sequence QSPQQTTTTTSSSNPNQTT. A compositionally biased stretch (polar residues) spans 414 to 426; sequence PQSSSTTTKPPAK.

This sequence belongs to the protein kinase superfamily. CK1 Ser/Thr protein kinase family. Casein kinase I subfamily. In terms of assembly, monomer. Autophosphorylated.

Its subcellular location is the cytoplasm. The protein localises to the nucleus. It catalyses the reaction L-seryl-[protein] + ATP = O-phospho-L-seryl-[protein] + ADP + H(+). The enzyme catalyses L-threonyl-[protein] + ATP = O-phospho-L-threonyl-[protein] + ADP + H(+). Its function is as follows. Casein kinases are operationally defined by their preferential utilization of acidic proteins such as caseins as substrates. Can phosphorylate a large number of proteins. May have a role in DNA repair mechanism and support vegetative growth of the cells. The protein is Casein kinase I (cak1-1) of Dictyostelium discoideum (Social amoeba).